We begin with the raw amino-acid sequence, 40 residues long: Photosystem II reaction center protein J (40 aa).

Residues I8 to F28 form a helical membrane-spanning segment.

It belongs to the PsbJ family. PSII is composed of 1 copy each of membrane proteins PsbA, PsbB, PsbC, PsbD, PsbE, PsbF, PsbH, PsbI, PsbJ, PsbK, PsbL, PsbM, PsbT, PsbX, PsbY, PsbZ, Psb30/Ycf12, at least 3 peripheral proteins of the oxygen-evolving complex and a large number of cofactors. It forms dimeric complexes.

The protein localises to the plastid. It is found in the chloroplast thylakoid membrane. Its function is as follows. One of the components of the core complex of photosystem II (PSII). PSII is a light-driven water:plastoquinone oxidoreductase that uses light energy to abstract electrons from H(2)O, generating O(2) and a proton gradient subsequently used for ATP formation. It consists of a core antenna complex that captures photons, and an electron transfer chain that converts photonic excitation into a charge separation. This Illicium oligandrum (Star anise) protein is Photosystem II reaction center protein J.